The sequence spans 185 residues: Endoribonuclease YbeY (185 aa).

The Zn(2+) site is built by histidine 135, histidine 139, and histidine 145.

Belongs to the endoribonuclease YbeY family. It depends on Zn(2+) as a cofactor.

Its subcellular location is the cytoplasm. In terms of biological role, single strand-specific metallo-endoribonuclease involved in late-stage 70S ribosome quality control and in maturation of the 3' terminus of the 16S rRNA. In Parasynechococcus marenigrum (strain WH8102), this protein is Endoribonuclease YbeY.